A 254-amino-acid polypeptide reads, in one-letter code: Adenosine 5'-phosphosulfate reductase (254 aa).

[4Fe-4S] cluster contacts are provided by C131, C132, C212, and C215. C238 acts as the Nucleophile; cysteine thiosulfonate intermediate in catalysis.

The protein belongs to the PAPS reductase family. CysH subfamily. Requires [4Fe-4S] cluster as cofactor.

Its subcellular location is the cytoplasm. It catalyses the reaction [thioredoxin]-disulfide + sulfite + AMP + 2 H(+) = adenosine 5'-phosphosulfate + [thioredoxin]-dithiol. It functions in the pathway sulfur metabolism; hydrogen sulfide biosynthesis; sulfite from sulfate. Functionally, catalyzes the formation of sulfite from adenosine 5'-phosphosulfate (APS) using thioredoxin as an electron donor. The chain is Adenosine 5'-phosphosulfate reductase from Mesorhizobium japonicum (strain LMG 29417 / CECT 9101 / MAFF 303099) (Mesorhizobium loti (strain MAFF 303099)).